We begin with the raw amino-acid sequence, 308 residues long: Ribosomal RNA small subunit methyltransferase H (308 aa).

S-adenosyl-L-methionine contacts are provided by residues 38 to 40 (GGH), D58, F82, D99, and Q106.

This sequence belongs to the methyltransferase superfamily. RsmH family.

Its subcellular location is the cytoplasm. It carries out the reaction cytidine(1402) in 16S rRNA + S-adenosyl-L-methionine = N(4)-methylcytidine(1402) in 16S rRNA + S-adenosyl-L-homocysteine + H(+). In terms of biological role, specifically methylates the N4 position of cytidine in position 1402 (C1402) of 16S rRNA. This Acidovorax ebreus (strain TPSY) (Diaphorobacter sp. (strain TPSY)) protein is Ribosomal RNA small subunit methyltransferase H.